Here is a 93-residue protein sequence, read N- to C-terminus: CRISPR-associated endoribonuclease Cas2 2 (93 aa).

A Mg(2+)-binding site is contributed by Asp9.

Belongs to the CRISPR-associated endoribonuclease Cas2 protein family. As to quaternary structure, homodimer, forms a heterotetramer with a Cas1 homodimer. Requires Mg(2+) as cofactor.

Its function is as follows. CRISPR (clustered regularly interspaced short palindromic repeat), is an adaptive immune system that provides protection against mobile genetic elements (viruses, transposable elements and conjugative plasmids). CRISPR clusters contain sequences complementary to antecedent mobile elements and target invading nucleic acids. CRISPR clusters are transcribed and processed into CRISPR RNA (crRNA). Functions as a ssRNA-specific endoribonuclease. Involved in the integration of spacer DNA into the CRISPR cassette. The sequence is that of CRISPR-associated endoribonuclease Cas2 2 from Synechocystis sp. (strain ATCC 27184 / PCC 6803 / Kazusa).